The sequence spans 112 residues: Small ribosomal subunit protein bS6 (112 aa).

This sequence belongs to the bacterial ribosomal protein bS6 family.

Functionally, binds together with bS18 to 16S ribosomal RNA. The chain is Small ribosomal subunit protein bS6 from Chlamydia abortus (strain DSM 27085 / S26/3) (Chlamydophila abortus).